A 110-amino-acid polypeptide reads, in one-letter code: Large ribosomal subunit protein uL24 (110 aa).

Belongs to the universal ribosomal protein uL24 family. Part of the 50S ribosomal subunit.

Functionally, one of two assembly initiator proteins, it binds directly to the 5'-end of the 23S rRNA, where it nucleates assembly of the 50S subunit. In terms of biological role, one of the proteins that surrounds the polypeptide exit tunnel on the outside of the subunit. The chain is Large ribosomal subunit protein uL24 from Frankia alni (strain DSM 45986 / CECT 9034 / ACN14a).